The sequence spans 406 residues: LIM/homeobox protein Lhx1 (406 aa).

2 LIM zinc-binding domains span residues 4–54 (CAGC…CKND) and 63–117 (CAGC…CKED). Disordered regions lie at residues 128 to 189 (NSLH…TIKA) and 294 to 372 (DFFP…SAEV). Low complexity predominate over residues 137-148 (SDPSLSPDSQDP). The span at 151-167 (DDAKDSESANVSDKEGG) shows a compositional bias: basic and acidic residues. S162 bears the Phosphoserine mark. A DNA-binding region (homeobox) is located at residues 180–239 (RRGPRTTIKAKQLETLKAAFAATPKPTRHIREQLAQETGLNMRVIQVWFQNRRSKERRMK). The segment covering 315-327 (PSSGPSGTPLGGL) has biased composition (low complexity). The segment covering 352–362 (GDSPSPEPSLP) has biased composition (pro residues).

Interacts with LDB1 via the tandem LIM domains.

The protein resides in the nucleus. Functionally, potential transcription factor. May play a role in early mesoderm formation and later in lateral mesoderm differentiation and neurogenesis. The polypeptide is LIM/homeobox protein Lhx1 (Lhx1) (Mesocricetus auratus (Golden hamster)).